We begin with the raw amino-acid sequence, 157 residues long: Transcriptional repressor NrdR (157 aa).

Positions 1–21 (MRCPYCGSEDSQVKDSRPAED) are disordered. Residues 3–34 (CPYCGSEDSQVKDSRPAEDGNAIRRRRICPDC) fold into a zinc finger. The span at 11–21 (SQVKDSRPAED) shows a compositional bias: basic and acidic residues. One can recognise an ATP-cone domain in the interval 49-139 (LMIIKKTGRK…VYRDFSHAED (91 aa)).

Belongs to the NrdR family. It depends on Zn(2+) as a cofactor.

Its function is as follows. Negatively regulates transcription of bacterial ribonucleotide reductase nrd genes and operons by binding to NrdR-boxes. The protein is Transcriptional repressor NrdR of Sinorhizobium medicae (strain WSM419) (Ensifer medicae).